Here is a 273-residue protein sequence, read N- to C-terminus: Flagellin FljM (273 aa).

Belongs to the bacterial flagellin family. In terms of assembly, in C.crescentus, the flagellar filament is composed of multiple flagellins of 29 kDa; 27 kDa and 25 kDa.

Its subcellular location is the secreted. The protein localises to the bacterial flagellum. In terms of biological role, flagellin is the subunit protein which polymerizes to form the filaments of bacterial flagella. In Caulobacter vibrioides (strain ATCC 19089 / CIP 103742 / CB 15) (Caulobacter crescentus), this protein is Flagellin FljM (fljM).